The primary structure comprises 354 residues: Ornithine transcarbamylase, mitochondrial (354 aa).

The transit peptide at 1–32 (MLFNLKNLYRITKLTQNSKHLPRHFCRGPPNQ) directs the protein to the mitochondrion. Residues 90 to 94 (STRTR), Arg-141, and His-168 each bind carbamoyl phosphate. Residue Arg-141 coordinates L-ornithine. L-ornithine-binding positions include Asn-199, 263–267 (DTWIS), 302–305 (HCLP), and Arg-330. Cys-303 is an active-site residue. Arg-330 is a carbamoyl phosphate binding site.

Belongs to the aspartate/ornithine carbamoyltransferase superfamily. OTCase family. Homotrimer. Cleavage of the precursor form to the active form occurs only in the kidney. As to expression, expressed in kidney, brain, heart, liver, pancreas, gizzard, small intestine and breast muscle. More abundant in mitochondrion-rich organs (heart, liver and brain) than in other organs. Activity is only detected in the kidney.

It localises to the mitochondrion matrix. The catalysed reaction is carbamoyl phosphate + L-ornithine = L-citrulline + phosphate + H(+). It functions in the pathway nitrogen metabolism; urea cycle; L-citrulline from L-ornithine and carbamoyl phosphate: step 1/1. With respect to regulation, inhibition by ornithine increases at higher pH. Catalyzes the second step of the urea cycle, the condensation of carbamoyl phosphate with L-ornithine to form L-citrulline. The urea cycle ensures the detoxification of ammonia by converting it to urea for excretion. The protein is Ornithine transcarbamylase, mitochondrial of Gallus gallus (Chicken).